Reading from the N-terminus, the 287-residue chain is U-megalopygitoxin(8)-Mc8 (287 aa).

Positions 1–17 are cleaved as a signal peptide; sequence MYLQYLVLSLFSTTVYG.

It belongs to the caterpillar 8 family. In terms of processing, contains 2 disulfide bonds. In terms of tissue distribution, expressed by the venom apparatus.

It is found in the secreted. In terms of biological role, probable toxin. This is U-megalopygitoxin(8)-Mc8 from Megalopyge crispata (Black-waved flannel moth).